Reading from the N-terminus, the 502-residue chain is Protein YdgA (502 aa).

The N-terminal stretch at 1–19 is a signal peptide; it reads MNKSLVAVGVIVALGVVWT.

It to E.coli YihF and H.influenzae HI_1236. Homodimer.

The protein resides in the cell inner membrane. This is Protein YdgA (ydgA) from Escherichia coli (strain K12).